We begin with the raw amino-acid sequence, 688 residues long: Envelope glycoprotein gp70 (688 aa).

The span at 1–15 (MPNHQSGSPTGSSDL) shows a compositional bias: polar residues. The disordered stretch occupies residues 1-31 (MPNHQSGSPTGSSDLLLSGKKQRPHLALRRK). The first 98 residues, 1–98 (MPNHQSGSPT…SVLGPPPVTG (98 aa)), serve as a signal peptide directing secretion. Residues 20-31 (KKQRPHLALRRK) are compositionally biased toward basic residues. Topologically, residues 99–624 (ESYWAYLPKP…ALNPLDWTQY (526 aa)) are extracellular. Residues Asn127 and Asn143 are each glycosylated (N-linked (GlcNAc...) asparagine; by host). A coiled-coil region spans residues 426–474 (LLPVDIGDEPWFDDSAIQTFRYATDLIRAKRFVAAIILGISALIAIITS). Residues 455–456 (KR) constitute a propeptide that is removed on maturation. Residues 457-477 (FVAAIILGISALIAIITSFAV) form a fusion peptide region. Residues 463 to 481 (LGISALIAIITSFAVATTA) are immunosuppression. Asn498 is a glycosylation site (N-linked (GlcNAc...) asparagine; by host). Residues 511-541 (LKLEARLNALEEVVLELGQDVANLKTRMSTR) are a coiled coil. An N-linked (GlcNAc...) asparagine; by host glycan is attached at Asn557. The helical transmembrane segment at 625-645 (FIFIGVGALLLVIVLMIFPIV) threads the bilayer. Residues 646–688 (FQCLAKSLDQVQSDLNVLLLKKKKGGNAAPAAEMVELPRVSYT) lie on the Cytoplasmic side of the membrane.

As to quaternary structure, the mature envelope protein (Env) consists of a trimer of SU-TM heterodimers attached by noncovalent interactions or by a labile interchain disulfide bond. Post-translationally, specific enzymatic cleavages in vivo yield mature proteins. Envelope glycoproteins are synthesized as an inactive precursor that is N-glycosylated and processed likely by host cell furin or by a furin-like protease in the Golgi to yield the mature SU and TM proteins. The cleavage site between SU and TM requires the minimal sequence [KR]-X-[KR]-R.

It localises to the virion membrane. Its subcellular location is the host cell membrane. Functionally, the surface protein (SU) attaches the virus to the host cell by binding to its receptor. This interaction triggers the refolding of the transmembrane protein (TM) and is thought to activate its fusogenic potential by unmasking its fusion peptide. Fusion occurs at the host cell plasma membrane. The transmembrane protein (TM) acts as a class I viral fusion protein. Under the current model, the protein has at least 3 conformational states: pre-fusion native state, pre-hairpin intermediate state, and post-fusion hairpin state. During viral and target cell membrane fusion, the coiled coil regions (heptad repeats) assume a trimer-of-hairpins structure, positioning the fusion peptide in close proximity to the C-terminal region of the ectodomain. The formation of this structure appears to drive apposition and subsequent fusion of viral and target cell membranes. Membranes fusion leads to delivery of the nucleocapsid into the cytoplasm. The polypeptide is Envelope glycoprotein gp70 (env) (Mus musculus (Mouse)).